The primary structure comprises 365 residues: Metallophosphoesterase 1 homolog (365 aa).

A helical transmembrane segment spans residues 10 to 30 (PILLAIILVVYNEYFIFFIAF). Positions 54, 96, 132, 208, 262, and 264 each coordinate a divalent metal cation. The chain crosses the membrane as a helical span at residues 319 to 339 (ILQIMVYIFGGIGIVILAFIL).

Belongs to the metallophosphoesterase superfamily. MPPE1 family. The cofactor is Mn(2+).

The protein localises to the endoplasmic reticulum-Golgi intermediate compartment membrane. Its subcellular location is the golgi apparatus. It is found in the cis-Golgi network membrane. Its function is as follows. Metallophosphoesterase required for transport of GPI-anchor proteins from the endoplasmic reticulum to the Golgi. Acts in lipid remodeling steps of GPI-anchor maturation by mediating the removal of a side-chain ethanolamine-phosphate (EtNP) from the second Man (Man2) of the GPI intermediate, an essential step for efficient transport of GPI-anchor proteins. The sequence is that of Metallophosphoesterase 1 homolog from Caenorhabditis elegans.